We begin with the raw amino-acid sequence, 77 residues long: NAD(P)H-quinone oxidoreductase subunit L (77 aa).

A run of 2 helical transmembrane segments spans residues 12–32 (LIAY…LLFY) and 47–67 (LGIY…SPFL).

This sequence belongs to the complex I NdhL subunit family. In terms of assembly, NDH-1 can be composed of about 15 different subunits; different subcomplexes with different compositions have been identified which probably have different functions.

Its subcellular location is the cellular thylakoid membrane. The enzyme catalyses a plastoquinone + NADH + (n+1) H(+)(in) = a plastoquinol + NAD(+) + n H(+)(out). It carries out the reaction a plastoquinone + NADPH + (n+1) H(+)(in) = a plastoquinol + NADP(+) + n H(+)(out). In terms of biological role, NDH-1 shuttles electrons from an unknown electron donor, via FMN and iron-sulfur (Fe-S) centers, to quinones in the respiratory and/or the photosynthetic chain. The immediate electron acceptor for the enzyme in this species is believed to be plastoquinone. Couples the redox reaction to proton translocation, and thus conserves the redox energy in a proton gradient. Cyanobacterial NDH-1 also plays a role in inorganic carbon-concentration. This is NAD(P)H-quinone oxidoreductase subunit L from Prochlorococcus marinus (strain MIT 9301).